The primary structure comprises 327 residues: Interleukin-12 subunit beta (327 aa).

A signal peptide spans 1 to 22 (MCHQKLTISWFAVVLLASPLMA). In terms of domain architecture, Ig-like C2-type spans 23 to 106 (IWELEKDVYV…LSHSRLLLHK (84 aa)). A disulfide bridge links Cys-50 with Cys-90. Asn-125, Asn-135, Asn-223, and Asn-315 each carry an N-linked (GlcNAc...) asparagine glycan. Positions 238–327 (PPKNLQLKPL…WSRWVSVPCS (90 aa)) constitute a Fibronectin type-III domain.

The protein belongs to the IL-12B family. In terms of assembly, heterodimer with IL12A; disulfide-linked. The heterodimer is known as interleukin IL-12. Heterodimer with IL23A; disulfide-linked. The heterodimer is known as interleukin IL-23. Also secreted as a monomer. Interacts with NBR1; this interaction promotes IL-12 secretion.

It is found in the secreted. In terms of biological role, cytokine that can act as a growth factor for activated T and NK cells, enhance the lytic activity of NK/lymphokine-activated killer cells, and stimulate the production of IFN-gamma by resting PBMC. Functionally, associates with IL23A to form the IL-23 interleukin, a heterodimeric cytokine which functions in innate and adaptive immunity. IL-23 may constitute with IL-17 an acute response to infection in peripheral tissues. IL-23 binds to a heterodimeric receptor complex composed of IL12RB1 and IL23R, activates the Jak-Stat signaling cascade, stimulates memory rather than naive T-cells and promotes production of pro-inflammatory cytokines. IL-23 induces autoimmune inflammation and thus may be responsible for autoimmune inflammatory diseases and may be important for tumorigenesis. This chain is Interleukin-12 subunit beta (IL12B), found in Mesocricetus auratus (Golden hamster).